A 672-amino-acid polypeptide reads, in one-letter code: DNA ligase (672 aa).

NAD(+)-binding positions include 35–39, 84–85, and Glu-115; these read DAQYD and SL. The active-site N6-AMP-lysine intermediate is Lys-117. NAD(+) contacts are provided by Arg-138, Glu-178, Lys-294, and Lys-318. Residues Cys-412, Cys-415, Cys-430, and Cys-435 each contribute to the Zn(2+) site. Residues 592 to 672 enclose the BRCT domain; sequence ATGGPFVGKS…AFLQMLQTNA (81 aa).

It belongs to the NAD-dependent DNA ligase family. LigA subfamily. It depends on Mg(2+) as a cofactor. The cofactor is Mn(2+).

It carries out the reaction NAD(+) + (deoxyribonucleotide)n-3'-hydroxyl + 5'-phospho-(deoxyribonucleotide)m = (deoxyribonucleotide)n+m + AMP + beta-nicotinamide D-nucleotide.. Functionally, DNA ligase that catalyzes the formation of phosphodiester linkages between 5'-phosphoryl and 3'-hydroxyl groups in double-stranded DNA using NAD as a coenzyme and as the energy source for the reaction. It is essential for DNA replication and repair of damaged DNA. The chain is DNA ligase from Myxococcus xanthus (strain DK1622).